Here is a 136-residue protein sequence, read N- to C-terminus: Large ribosomal subunit protein uL16 (136 aa).

This sequence belongs to the universal ribosomal protein uL16 family. Part of the 50S ribosomal subunit.

Its function is as follows. Binds 23S rRNA and is also seen to make contacts with the A and possibly P site tRNAs. This is Large ribosomal subunit protein uL16 from Vibrio vulnificus (strain YJ016).